The chain runs to 184 residues: Alpha-tubulin N-acetyltransferase (184 aa).

Positions 1–174 (MNIPPEKMHN…NNFVIFAEYF (174 aa)) constitute an N-acetyltransferase domain. Acetyl-CoA is bound by residues 108–121 (FYIQRNFRKRGLGL) and 144–153 (SYKLQSFLKK).

This sequence belongs to the acetyltransferase ATAT1 family.

It catalyses the reaction L-lysyl-[alpha-tubulin] + acetyl-CoA = N(6)-acetyl-L-lysyl-[alpha-tubulin] + CoA + H(+). In terms of biological role, specifically acetylates 'Lys-40' in alpha-tubulin on the lumenal side of microtubules. Promotes microtubule destabilization and accelerates microtubule dynamics; this activity may be independent of acetylation activity. Acetylates alpha-tubulin with a slow enzymatic rate, due to a catalytic site that is not optimized for acetyl transfer. Enters the microtubule through each end and diffuses quickly throughout the lumen of microtubules. Acetylates only long/old microtubules because of its slow acetylation rate since it does not have time to act on dynamically unstable microtubules before the enzyme is released. This chain is Alpha-tubulin N-acetyltransferase, found in Plasmodium knowlesi (strain H).